The primary structure comprises 667 residues: MTIIDASERIAQLRQEIERHNYLYFNEAKPELSDYEFDKLLEELMALEREFPDLLTPDSPSQRVGGTITKEFPVVTHREPMLSLANTYSAGEVAEFYNRVAKLLAAENVHKQEMVAELKFDGVAISLLYRDGVLVRGATRGDGVQGDDITPNIRTIASIPLRLHQPLAGEVEVRGEIFMRKEDFEQLNDNRPEEERFANPRNATAGTLKLQDSAEVARRRMNFVAYYLKGLKDETLDHVSRLHKLEALGFTTGGHYRRCKTIEEINTFINEWEEKRWKLPYETDGVVLKLNNVQLWEQLGATAKSPRWAIAYKYPAQQARTQLCNVVFQVGRIGTITPVAELTPVLLAGSTVSRSTLHNFDEIERLSVMILDYVMIEKSGEVIPKVVRTLPDERPADAHAIAIPTHCPECDTPLIKPENEVSWYCPNEEHCPAQIRGRLLHFASRNAMDIKGLGDALVEQLVAWGLVHDVGDLYLLQEPQLERMERMGKKSAQNLIRALDESRTRSYDRLLYALGIRHVGRATARELAHAFPTLDALMQANEERLAEVPDIGTTVAQSIVDFFAKPSSRQLVDKLREARLQLAASASKIEQVNRNFEGMSLLFTGTLERYTRQQAAELVVERGGRVVESISKKTSLLVAGRDGGSKLDKAHKLGVRVISEDEFMGMM.

NAD(+)-binding positions include 34-38, 83-84, and E117; these read DYEFD and SL. The active-site N6-AMP-lysine intermediate is K119. The NAD(+) site is built by R140, E176, K289, and K313. 4 residues coordinate Zn(2+): C407, C410, C425, and C431. In terms of domain architecture, BRCT spans 591-667; sequence QVNRNFEGMS…ISEDEFMGMM (77 aa).

It belongs to the NAD-dependent DNA ligase family. LigA subfamily. Mg(2+) is required as a cofactor. It depends on Mn(2+) as a cofactor.

The catalysed reaction is NAD(+) + (deoxyribonucleotide)n-3'-hydroxyl + 5'-phospho-(deoxyribonucleotide)m = (deoxyribonucleotide)n+m + AMP + beta-nicotinamide D-nucleotide.. DNA ligase that catalyzes the formation of phosphodiester linkages between 5'-phosphoryl and 3'-hydroxyl groups in double-stranded DNA using NAD as a coenzyme and as the energy source for the reaction. It is essential for DNA replication and repair of damaged DNA. The protein is DNA ligase of Chlorobium chlorochromatii (strain CaD3).